Consider the following 215-residue polypeptide: Oligoribonuclease (215 aa).

The region spanning 5 to 170 (LVWIDCEMTG…ADIHESIREL (166 aa)) is the Exonuclease domain. Tyrosine 127 is a catalytic residue. The interval 196 to 215 (LGPPGKDAADTDSAAGHTTG) is disordered.

This sequence belongs to the oligoribonuclease family.

It localises to the cytoplasm. Functionally, 3'-to-5' exoribonuclease specific for small oligoribonucleotides. The polypeptide is Oligoribonuclease (Mycobacterium sp. (strain JLS)).